The chain runs to 88 residues: Stannin (88 aa).

Topologically, residues 1–10 (MSIMDHSPTT) are mitochondrial intermembrane. A helical membrane pass occupies residues 11–31 (GVVTVIVILIAIAALGALILG). Residues 32–88 (CWCYLRLQRISQSEDEESIVGDGETKEPFLLVQYSAKGPCVERKAKLMTANSPEVHG) lie on the Cytoplasmic side of the membrane. Phosphoserine is present on residues Ser49 and Ser83.

Belongs to the stannin family. As to quaternary structure, monomer.

The protein resides in the mitochondrion outer membrane. Functionally, plays a role in the toxic effects of organotins. Plays a role in endosomal maturation. This chain is Stannin (Snn), found in Mus musculus (Mouse).